The following is a 559-amino-acid chain: Poly(3-hydroxyalkanoate) polymerase 1 (559 aa).

The active site involves cysteine 296.

Belongs to the PHA/PHB synthase family. Type II PhaC subfamily.

It participates in biopolymer metabolism; poly-(R)-3-hydroxybutanoate biosynthesis. Functionally, synthesizes poly(3-hydroxyalkanoates) (PHA), complements a mutant of P.putida that does not make PHA. The protein is Poly(3-hydroxyalkanoate) polymerase 1 of Ectopseudomonas oleovorans (Pseudomonas oleovorans).